The following is a 112-amino-acid chain: Nucleoid-associated protein FTF0810c (112 aa).

Residues 1–27 (MNFDMSKLMQQAQKMQEQMKKAQQERE) are disordered. The span at 17–27 (EQMKKAQQERE) shows a compositional bias: basic and acidic residues.

This sequence belongs to the YbaB/EbfC family. As to quaternary structure, homodimer.

It localises to the cytoplasm. It is found in the nucleoid. Functionally, binds to DNA and alters its conformation. May be involved in regulation of gene expression, nucleoid organization and DNA protection. The sequence is that of Nucleoid-associated protein FTF0810c from Francisella tularensis subsp. tularensis (strain FSC 198).